The primary structure comprises 413 residues: Serine hydroxymethyltransferase (413 aa).

(6S)-5,6,7,8-tetrahydrofolate contacts are provided by residues L119 and 123-125; that span reads GHL. An N6-(pyridoxal phosphate)lysine modification is found at K228. (6S)-5,6,7,8-tetrahydrofolate is bound at residue 351-353; that stretch reads SPF.

It belongs to the SHMT family. As to quaternary structure, homodimer. It depends on pyridoxal 5'-phosphate as a cofactor.

It localises to the cytoplasm. It catalyses the reaction (6R)-5,10-methylene-5,6,7,8-tetrahydrofolate + glycine + H2O = (6S)-5,6,7,8-tetrahydrofolate + L-serine. The protein operates within one-carbon metabolism; tetrahydrofolate interconversion. It participates in amino-acid biosynthesis; glycine biosynthesis; glycine from L-serine: step 1/1. Catalyzes the reversible interconversion of serine and glycine with tetrahydrofolate (THF) serving as the one-carbon carrier. This reaction serves as the major source of one-carbon groups required for the biosynthesis of purines, thymidylate, methionine, and other important biomolecules. Also exhibits THF-independent aldolase activity toward beta-hydroxyamino acids, producing glycine and aldehydes, via a retro-aldol mechanism. The polypeptide is Serine hydroxymethyltransferase (Clostridium botulinum (strain 657 / Type Ba4)).